Reading from the N-terminus, the 1755-residue chain is Transposon Ty1-DR1 Gag-Pol polyprotein (1755 aa).

Polar residues-rich tracts occupy residues 1-10, 48-60, and 127-152; these read MESQQLSNYP, TKANSQQTTTPAS, and QSQFPQYPSSVGTPLSTPSPESGNTF. Disordered stretches follow at residues 1 to 93, 126 to 173, and 352 to 421; these read MESQ…MMTQ, PQSQ…RPPP, and GSRN…SKST. Residues 153–165 are compositionally biased toward low complexity; the sequence is TDSSSADSDMTST. The tract at residues 299–401 is RNA-binding; the sequence is NNGIHINNKV…NSKSKTARAH (103 aa). A compositionally biased stretch (low complexity) spans 402–418; the sequence is NVSTSNNSPSTDNDSIS. Residue S416 is modified to Phosphoserine. D461 (for protease activity; shared with dimeric partner) is an active-site residue. The segment at 583–640 is integrase-type zinc finger-like; it reads NVHTSESTRKYPYPFIHRMLAHANAQTIRYSLKNNTITYFNESDVDWSSAIDYQCPDC. In terms of domain architecture, Integrase catalytic spans 660–835; that stretch reads NSYEPFQYLH…AGLDISTLLP (176 aa). 2 residues coordinate Mg(2+): D671 and D736. Disordered regions lie at residues 956-1087, 1092-1111, and 1130-1187; these read SKAV…ETEK, RSPSIDASPPENNSSHNIVP, and DLPL…DNET. The segment covering 960–969 has biased composition (low complexity); that stretch reads SPTDSTPPST. Polar residues predominate over residues 1005-1015; it reads STPQISNIEST. Positions 1038–1053 are enriched in basic and acidic residues; that stretch reads ESSHASKSKDFRHSDS. Composition is skewed to polar residues over residues 1054 to 1082 and 1101 to 1111; these read YSENETNHTNVPISSTGGTNNKTVPQISD and PENNSSHNIVP. The short motif at 1178–1212 is the Bipartite nuclear localization signal element; sequence KKRSLEDNETEIKVSRDTWNTKNMRSLEPPRSKKR. The 139-residue stretch at 1338-1476 folds into the Reverse transcriptase Ty1/copia-type domain; the sequence is NNYYITQLDI…DILGLEIKYQ (139 aa). Positions 1346, 1427, 1428, 1610, 1652, and 1685 each coordinate Mg(2+). Residues 1610–1752 form the RNase H Ty1/copia-type domain; sequence DASYGNQPYY…IKTFKLLTNK (143 aa).

In terms of assembly, the capsid protein forms a homotrimer, from which the VLPs are assembled. The protease is a homodimer, whose active site consists of two apposed aspartic acid residues. In terms of processing, initially, virus-like particles (VLPs) are composed of the structural unprocessed proteins Gag and Gag-Pol, and also contain the host initiator methionine tRNA (tRNA(i)-Met) which serves as a primer for minus-strand DNA synthesis, and a dimer of genomic Ty RNA. Processing of the polyproteins occurs within the particle and proceeds by an ordered pathway, called maturation. First, the protease (PR) is released by autocatalytic cleavage of the Gag-Pol polyprotein yielding capsid protein p45 and a Pol-p154 precursor protein. This cleavage is a prerequisite for subsequent processing of Pol-p154 at the remaining sites to release the mature structural and catalytic proteins. Maturation takes place prior to the RT reaction and is required to produce transposition-competent VLPs.

It localises to the cytoplasm. The protein localises to the nucleus. The enzyme catalyses DNA(n) + a 2'-deoxyribonucleoside 5'-triphosphate = DNA(n+1) + diphosphate. It carries out the reaction Endonucleolytic cleavage to 5'-phosphomonoester.. Capsid protein (CA) is the structural component of the virus-like particle (VLP), forming the shell that encapsulates the retrotransposons dimeric RNA genome. The particles are assembled from trimer-clustered units and there are holes in the capsid shells that allow for the diffusion of macromolecules. CA also has nucleocapsid-like chaperone activity, promoting primer tRNA(i)-Met annealing to the multipartite primer-binding site (PBS), dimerization of Ty1 RNA and initiation of reverse transcription. Functionally, the aspartyl protease (PR) mediates the proteolytic cleavages of the Gag and Gag-Pol polyproteins after assembly of the VLP. In terms of biological role, reverse transcriptase/ribonuclease H (RT) is a multifunctional enzyme that catalyzes the conversion of the retro-elements RNA genome into dsDNA within the VLP. The enzyme displays a DNA polymerase activity that can copy either DNA or RNA templates, and a ribonuclease H (RNase H) activity that cleaves the RNA strand of RNA-DNA heteroduplexes during plus-strand synthesis and hydrolyzes RNA primers. The conversion leads to a linear dsDNA copy of the retrotransposon that includes long terminal repeats (LTRs) at both ends. Its function is as follows. Integrase (IN) targets the VLP to the nucleus, where a subparticle preintegration complex (PIC) containing at least integrase and the newly synthesized dsDNA copy of the retrotransposon must transit the nuclear membrane. Once in the nucleus, integrase performs the integration of the dsDNA into the host genome. The sequence is that of Transposon Ty1-DR1 Gag-Pol polyprotein (TY1B-DR1) from Saccharomyces cerevisiae (strain ATCC 204508 / S288c) (Baker's yeast).